We begin with the raw amino-acid sequence, 136 residues long: Large ribosomal subunit protein uL16 (136 aa).

It belongs to the universal ribosomal protein uL16 family. Part of the 50S ribosomal subunit.

Its function is as follows. Binds 23S rRNA and is also seen to make contacts with the A and possibly P site tRNAs. The protein is Large ribosomal subunit protein uL16 of Rickettsia prowazekii (strain Madrid E).